We begin with the raw amino-acid sequence, 149 residues long: Large ribosomal subunit protein bL9 (149 aa).

Belongs to the bacterial ribosomal protein bL9 family.

Functionally, binds to the 23S rRNA. The protein is Large ribosomal subunit protein bL9 of Clostridioides difficile (strain 630) (Peptoclostridium difficile).